We begin with the raw amino-acid sequence, 228 residues long: UPF0173 metal-dependent hydrolase Dred_1740 (228 aa).

The protein belongs to the UPF0173 family.

The polypeptide is UPF0173 metal-dependent hydrolase Dred_1740 (Desulforamulus reducens (strain ATCC BAA-1160 / DSM 100696 / MI-1) (Desulfotomaculum reducens)).